The following is a 416-amino-acid chain: Serine hydroxymethyltransferase (416 aa).

Residues leucine 118 and 122–124 each bind (6S)-5,6,7,8-tetrahydrofolate; that span reads GHL. Lysine 226 is modified (N6-(pyridoxal phosphate)lysine). Glutamate 242 is a binding site for (6S)-5,6,7,8-tetrahydrofolate.

The protein belongs to the SHMT family. Homodimer. Pyridoxal 5'-phosphate is required as a cofactor.

It localises to the cytoplasm. It carries out the reaction (6R)-5,10-methylene-5,6,7,8-tetrahydrofolate + glycine + H2O = (6S)-5,6,7,8-tetrahydrofolate + L-serine. The protein operates within one-carbon metabolism; tetrahydrofolate interconversion. It functions in the pathway amino-acid biosynthesis; glycine biosynthesis; glycine from L-serine: step 1/1. In terms of biological role, catalyzes the reversible interconversion of serine and glycine with tetrahydrofolate (THF) serving as the one-carbon carrier. This reaction serves as the major source of one-carbon groups required for the biosynthesis of purines, thymidylate, methionine, and other important biomolecules. Also exhibits THF-independent aldolase activity toward beta-hydroxyamino acids, producing glycine and aldehydes, via a retro-aldol mechanism. This chain is Serine hydroxymethyltransferase, found in Helicobacter pylori (strain J99 / ATCC 700824) (Campylobacter pylori J99).